Reading from the N-terminus, the 147-residue chain is MKVILLKDVKKLGKKDDVVNVSDGYARNFLFPRKLALEAKESNLNLLNNKKEAERKQKLAELEEAQKLAEELKNQELILKVKSGDNGKLFGSITGKDISDELKKKFKLDIDRRKINVENIRQLGVYDVEIKLYPEVSTKIKVKIEDI.

The protein belongs to the bacterial ribosomal protein bL9 family.

In terms of biological role, binds to the 23S rRNA. The chain is Large ribosomal subunit protein bL9 from Clostridium tetani (strain Massachusetts / E88).